The following is a 339-amino-acid chain: Cobalt-precorrin-5B C(1)-methyltransferase (339 aa).

This sequence belongs to the CbiD family.

It carries out the reaction Co-precorrin-5B + S-adenosyl-L-methionine = Co-precorrin-6A + S-adenosyl-L-homocysteine. It participates in cofactor biosynthesis; adenosylcobalamin biosynthesis; cob(II)yrinate a,c-diamide from sirohydrochlorin (anaerobic route): step 6/10. Its function is as follows. Catalyzes the methylation of C-1 in cobalt-precorrin-5B to form cobalt-precorrin-6A. The sequence is that of Cobalt-precorrin-5B C(1)-methyltransferase from Methanosarcina acetivorans (strain ATCC 35395 / DSM 2834 / JCM 12185 / C2A).